The primary structure comprises 531 residues: Transcription termination/antitermination protein NusA (531 aa).

Residues 165-235 (GEVIEAKVED…SLWPITLSRS (71 aa)) form the S1 motif domain. The region spanning 340 to 410 (DTSIEVVVPA…FGIKKRREKI (71 aa)) is the KH domain. Residues 463–475 (EKQVTPKEKEKVQ) are compositionally biased toward basic and acidic residues. The segment at 463 to 531 (EKQVTPKEKE…KQTFDSFDDL (69 aa)) is disordered. The segment covering 476 to 490 (PKAKVHSNSHSKKPA) has biased composition (basic residues). Residues 502-512 (ASDKNLKKDQV) are compositionally biased toward basic and acidic residues. Over residues 513–531 (DNNQTNPQTKQTFDSFDDL) the composition is skewed to polar residues.

The protein belongs to the NusA family. In terms of assembly, monomer. Binds directly to the core enzyme of the DNA-dependent RNA polymerase and to nascent RNA.

The protein resides in the cytoplasm. In terms of biological role, participates in both transcription termination and antitermination. This chain is Transcription termination/antitermination protein NusA, found in Mycoplasma genitalium (strain ATCC 33530 / DSM 19775 / NCTC 10195 / G37) (Mycoplasmoides genitalium).